An 838-amino-acid polypeptide reads, in one-letter code: Probable beta-glucosidase I (838 aa).

Residue asparagine 197 is glycosylated (N-linked (GlcNAc...) asparagine). Aspartate 225 is an active-site residue. A PA14 domain is found at 395 to 555; the sequence is DGKKGFKFRV…SQEELISKAA (161 aa). An N-linked (GlcNAc...) asparagine glycan is attached at asparagine 493.

This sequence belongs to the glycosyl hydrolase 3 family.

It is found in the secreted. It catalyses the reaction Hydrolysis of terminal, non-reducing beta-D-glucosyl residues with release of beta-D-glucose.. It participates in glycan metabolism; cellulose degradation. In terms of biological role, beta-glucosidases are one of a number of cellulolytic enzymes involved in the degradation of cellulosic biomass. Catalyzes the last step releasing glucose from the inhibitory cellobiose. The protein is Probable beta-glucosidase I (bglI) of Aspergillus fumigatus (strain ATCC MYA-4609 / CBS 101355 / FGSC A1100 / Af293) (Neosartorya fumigata).